The sequence spans 307 residues: tRNA dimethylallyltransferase 1 (307 aa).

An ATP-binding site is contributed by 10 to 17 (GPTASGKT). 12-17 (TASGKT) provides a ligand contact to substrate. The tract at residues 35-38 (DSRQ) is interaction with substrate tRNA.

This sequence belongs to the IPP transferase family. Monomer. Mg(2+) is required as a cofactor.

The enzyme catalyses adenosine(37) in tRNA + dimethylallyl diphosphate = N(6)-dimethylallyladenosine(37) in tRNA + diphosphate. Functionally, catalyzes the transfer of a dimethylallyl group onto the adenine at position 37 in tRNAs that read codons beginning with uridine, leading to the formation of N6-(dimethylallyl)adenosine (i(6)A). This is tRNA dimethylallyltransferase 1 from Geotalea daltonii (strain DSM 22248 / JCM 15807 / FRC-32) (Geobacter daltonii).